A 263-amino-acid chain; its full sequence is 4-hydroxy-2-oxo-heptane-1,7-dioate aldolase (263 aa).

Catalysis depends on His-45, which acts as the Proton acceptor. Gln-147 is a substrate binding site. Glu-149 contributes to the a divalent metal cation binding site. Ala-174 and Asp-175 together coordinate substrate. Asp-175 provides a ligand contact to a divalent metal cation.

It belongs to the HpcH/HpaI aldolase family. Homohexamer; trimer of dimers. A divalent metal cation serves as cofactor.

It catalyses the reaction 4-hydroxy-2-oxoheptanedioate = succinate semialdehyde + pyruvate. The protein operates within aromatic compound metabolism; 4-hydroxyphenylacetate degradation; pyruvate and succinate semialdehyde from 4-hydroxyphenylacetate: step 7/7. Its function is as follows. Catalyzes the reversible retro-aldol cleavage of 4-hydroxy-2-ketoheptane-1,7-dioate (HKHD) to pyruvate and succinic semialdehyde. The protein is 4-hydroxy-2-oxo-heptane-1,7-dioate aldolase of Salmonella choleraesuis (strain SC-B67).